Consider the following 328-residue polypeptide: Stress response kinase A (328 aa).

The active-site Proton acceptor is aspartate 201. Mg(2+) is bound by residues asparagine 206 and aspartate 217. The active site involves aspartate 217.

The protein belongs to the SrkA/RdoA protein kinase family. Monomer. The cofactor is Mg(2+).

Its subcellular location is the cytoplasm. It carries out the reaction L-seryl-[protein] + ATP = O-phospho-L-seryl-[protein] + ADP + H(+). It catalyses the reaction L-threonyl-[protein] + ATP = O-phospho-L-threonyl-[protein] + ADP + H(+). A protein kinase that phosphorylates Ser and Thr residues. Probably acts to suppress the effects of stress linked to accumulation of reactive oxygen species. Probably involved in the extracytoplasmic stress response. The sequence is that of Stress response kinase A from Escherichia coli O157:H7.